We begin with the raw amino-acid sequence, 512 residues long: ATP synthase subunit alpha (512 aa).

169-176 is a binding site for ATP; the sequence is GDRQTGKT.

It belongs to the ATPase alpha/beta chains family. As to quaternary structure, F-type ATPases have 2 components, CF(1) - the catalytic core - and CF(0) - the membrane proton channel. CF(1) has five subunits: alpha(3), beta(3), gamma(1), delta(1), epsilon(1). CF(0) has three main subunits: a(1), b(2) and c(9-12). The alpha and beta chains form an alternating ring which encloses part of the gamma chain. CF(1) is attached to CF(0) by a central stalk formed by the gamma and epsilon chains, while a peripheral stalk is formed by the delta and b chains.

Its subcellular location is the cell inner membrane. It carries out the reaction ATP + H2O + 4 H(+)(in) = ADP + phosphate + 5 H(+)(out). Its function is as follows. Produces ATP from ADP in the presence of a proton gradient across the membrane. The alpha chain is a regulatory subunit. The polypeptide is ATP synthase subunit alpha (Rickettsia bellii (strain OSU 85-389)).